Here is a 313-residue protein sequence, read N- to C-terminus: Putative HTH-type transcriptional regulatory protein Msm_0453 (313 aa).

In terms of domain architecture, HTH cro/C1-type spans 131–189 (IKQYREEYSLSLKDLADLAHVSRATMYKYENEIVRANTETAMILEEILNTKVTLDIDLL). Residues 142–161 (LKDLADLAHVSRATMYKYEN) constitute a DNA-binding region (H-T-H motif).

The chain is Putative HTH-type transcriptional regulatory protein Msm_0453 from Methanobrevibacter smithii (strain ATCC 35061 / DSM 861 / OCM 144 / PS).